Here is a 101-residue protein sequence, read N- to C-terminus: NADH-quinone oxidoreductase subunit K (101 aa).

3 consecutive transmembrane segments (helical) span residues 4–24 (LGHM…GIFL), 30–50 (IVLL…FVAF), and 62–82 (FVFF…AILV).

This sequence belongs to the complex I subunit 4L family. As to quaternary structure, NDH-1 is composed of 14 different subunits. Subunits NuoA, H, J, K, L, M, N constitute the membrane sector of the complex.

It is found in the cell inner membrane. It carries out the reaction a quinone + NADH + 5 H(+)(in) = a quinol + NAD(+) + 4 H(+)(out). NDH-1 shuttles electrons from NADH, via FMN and iron-sulfur (Fe-S) centers, to quinones in the respiratory chain. The immediate electron acceptor for the enzyme in this species is believed to be ubiquinone. Couples the redox reaction to proton translocation (for every two electrons transferred, four hydrogen ions are translocated across the cytoplasmic membrane), and thus conserves the redox energy in a proton gradient. The protein is NADH-quinone oxidoreductase subunit K of Stenotrophomonas maltophilia (strain R551-3).